Reading from the N-terminus, the 325-residue chain is Cytochrome c1, heme protein, mitochondrial (325 aa).

The N-terminal 84 residues, 1-84 (MAAAAASLRR…AVALHSAVSA (84 aa)), are a transit peptide targeting the mitochondrion. Residues 85-287 (SDLELHPPSY…SEPEHDHRKR (203 aa)) are Mitochondrial intermembrane-facing. Residues 108–209 (TSIRRGFQVY…IVRARHGGED (102 aa)) form the Cytochrome c domain. Heme c is bound by residues Cys121, Cys124, His125, and Met244. Residues 288 to 308 (MGLKMLLMMGLLLPLTYAMKR) form a helical membrane-spanning segment. Topologically, residues 309–325 (HKWSVLKSRKLAYRPPK) are mitochondrial matrix.

The protein belongs to the cytochrome c family. In terms of assembly, component of the ubiquinol-cytochrome c oxidoreductase (cytochrome b-c1 complex, complex III, CIII), a multisubunit enzyme composed of 11 subunits. The complex is composed of 3 respiratory subunits cytochrome b, cytochrome c1 and Rieske protein UQCRFS1, 2 core protein subunits UQCRC1/QCR1 and UQCRC2/QCR2, and 6 low-molecular weight protein subunits UQCRH/QCR6, UQCRB/QCR7, UQCRQ/QCR8, UQCR10/QCR9, UQCR11/QCR10 and subunit 9, the cleavage product of Rieske protein UQCRFS1. The complex exists as an obligatory dimer and forms supercomplexes (SCs) in the inner mitochondrial membrane with NADH-ubiquinone oxidoreductase (complex I, CI) and cytochrome c oxidase (complex IV, CIV), resulting in different assemblies (supercomplex SCI(1)III(2)IV(1) and megacomplex MCI(2)III(2)IV(2)). Interacts with FLVCR2; this interaction occurs in the absence of heme and is disrupted upon heme binding. Heme c serves as cofactor.

The protein localises to the mitochondrion inner membrane. It carries out the reaction a quinol + 2 Fe(III)-[cytochrome c](out) = a quinone + 2 Fe(II)-[cytochrome c](out) + 2 H(+)(out). Its function is as follows. Component of the ubiquinol-cytochrome c oxidoreductase, a multisubunit transmembrane complex that is part of the mitochondrial electron transport chain which drives oxidative phosphorylation. The respiratory chain contains 3 multisubunit complexes succinate dehydrogenase (complex II, CII), ubiquinol-cytochrome c oxidoreductase (cytochrome b-c1 complex, complex III, CIII) and cytochrome c oxidase (complex IV, CIV), that cooperate to transfer electrons derived from NADH and succinate to molecular oxygen, creating an electrochemical gradient over the inner membrane that drives transmembrane transport and the ATP synthase. The cytochrome b-c1 complex catalyzes electron transfer from ubiquinol to cytochrome c, linking this redox reaction to translocation of protons across the mitochondrial inner membrane, with protons being carried across the membrane as hydrogens on the quinol. In the process called Q cycle, 2 protons are consumed from the matrix, 4 protons are released into the intermembrane space and 2 electrons are passed to cytochrome c. Cytochrome c1 is a catalytic core subunit containing a c-type heme. It transfers electrons from the [2Fe-2S] iron-sulfur cluster of the Rieske protein to cytochrome c. The polypeptide is Cytochrome c1, heme protein, mitochondrial (Cyc1) (Mus musculus (Mouse)).